Reading from the N-terminus, the 188-residue chain is Auxin-induced protein 22C (188 aa).

The EAR-like (transcriptional repression) motif lies at 13–17; the sequence is LRLGL. Residues 16–57 are disordered; that stretch reads GLPGAGGENNTDKDKNKNKKRVFSDIEGENSSSEEDGKKETK. The 89-residue stretch at 79-167 folds into the PB1 domain; that stretch reads KLYVKVSMDG…KRLRIMKRSD (89 aa).

The protein belongs to the Aux/IAA family. As to quaternary structure, homodimers and heterodimers.

The protein resides in the nucleus. Functionally, aux/IAA proteins are short-lived transcriptional factors that function as repressors of early auxin response genes at low auxin concentrations. Repression is thought to result from the interaction with auxin response factors (ARFs), proteins that bind to the auxin-responsive promoter element (AuxRE). Formation of heterodimers with ARF proteins may alter their ability to modulate early auxin response genes expression. This is Auxin-induced protein 22C (AUX22C) from Vigna radiata var. radiata (Mung bean).